A 48-amino-acid polypeptide reads, in one-letter code: Piguamerin (48 aa).

Cystine bridges form between cysteine 3-cysteine 14, cysteine 8-cysteine 19, cysteine 21-cysteine 41, cysteine 26-cysteine 45, and cysteine 30-cysteine 47. An Antistasin-like domain is found at 19 to 47 (CVCVIGQCRKYCPNGFKKDENGCTFPCTC).

It belongs to the protease inhibitor I15 (antistasin) family.

It localises to the secreted. Inhibits plasma and tissue kallikrein, and trypsin. May be involved in leech hematophagia. The protein is Piguamerin of Hirudo nipponia (Korean blood-sucking leech).